Here is a 298-residue protein sequence, read N- to C-terminus: Aclacinomycin methylesterase RdmC (298 aa).

An AB hydrolase-1 domain is found at 24–277; that stretch reads PALLLVMGGN…LAEIPGMGHA (254 aa). Active-site residues include Ser-102, Asp-248, and His-276.

This sequence belongs to the AB hydrolase superfamily. Hydrolase RdmC family. Monomer.

It catalyses the reaction aclacinomycin T + H2O = 15-demethylaclacinomycin T + methanol. The protein operates within antibiotic biosynthesis; aclacinomycin biosynthesis. Involved in the biosynthesis of the anthracycline aclacinomycin which is an aromatic polyketide antibiotic that exhibits high cytotoxicity and is widely applied in the chemotherapy of a variety of cancers. Catalyzes the removal of the methoxy group from the C-15 position of aclacinomycin T and A to yield 15-demethoxyaclacinomycin T and A, respectively. This chain is Aclacinomycin methylesterase RdmC (rdmC), found in Streptomyces purpurascens.